We begin with the raw amino-acid sequence, 297 residues long: MSSAHFNRGPAYGLSAEVKNKLAQKYDHQREQELREWIEGVTGRRIGNNFMDGLKDGIILCEFINKLQPGSVKKVNESTQNWHQLENIGNFIKAITKYGVKPHDIFEANDLFENTNHTQVQSTLLALASMAKTKGNKVNVGVKYAEKQERRFEPEKLREGRNIIGLQMGTNKFASQQGMTAYGTRRHLYDPKLGTDQPLDQATISLQMGTNKGASQAGMTAPGTKRQIFEPGLGMEHCDTLNVSLQMGSNKGASQRGMTVYGLPRQVYDPKYCLNPEYPELSEPTHNHHPHNYYNSA.

A Calponin-homology (CH) domain is found at 28-131; that stretch reads HQREQELREW…STLLALASMA (104 aa). Calponin-like repeat units follow at residues 164-189, 204-229, and 243-268; these read IGLQ…RHLY, ISLQ…RQIF, and VSLQ…RQVY. Phosphothreonine; by ROCK2 is present on Thr170. Ser175 is subject to Phosphoserine; by ROCK2. Thr180 and Thr184 each carry phosphothreonine; by ROCK2. Thr259 carries the phosphothreonine; by ROCK2 modification.

The protein belongs to the calponin family. As to quaternary structure, part of cGMP kinase signaling complex at least composed of ACTA2/alpha-actin, CNN1/calponin H1, PLN/phospholamban, PRKG1 and ITPR1. Smooth muscle, and tissues containing significant amounts of smooth muscle.

Thin filament-associated protein that is implicated in the regulation and modulation of smooth muscle contraction. It is capable of binding to actin, calmodulin and tropomyosin. The interaction of calponin with actin inhibits the actomyosin Mg-ATPase activity. In Mus musculus (Mouse), this protein is Calponin-1 (Cnn1).